A 50-amino-acid chain; its full sequence is AAAQHLCGSHLVDALYLVCGEKGFFYNPKGIVEQCCHKPCNIFDLQNYCN.

Cystine bridges form between cysteine 7–cysteine 36, cysteine 19–cysteine 49, and cysteine 35–cysteine 40.

This sequence belongs to the insulin family. Heterodimer of a B chain and an A chain linked by two disulfide bonds.

Its subcellular location is the secreted. Functionally, insulin decreases blood glucose concentration. It increases cell permeability to monosaccharides, amino acids and fatty acids. It accelerates glycolysis, the pentose phosphate cycle, and glycogen synthesis in liver. The sequence is that of Insulin (ins) from Oncorhynchus gorbuscha (Pink salmon).